We begin with the raw amino-acid sequence, 109 residues long: Large ribosomal subunit protein uL22 (109 aa).

This sequence belongs to the universal ribosomal protein uL22 family. As to quaternary structure, part of the 50S ribosomal subunit.

Its function is as follows. This protein binds specifically to 23S rRNA; its binding is stimulated by other ribosomal proteins, e.g. L4, L17, and L20. It is important during the early stages of 50S assembly. It makes multiple contacts with different domains of the 23S rRNA in the assembled 50S subunit and ribosome. The globular domain of the protein is located near the polypeptide exit tunnel on the outside of the subunit, while an extended beta-hairpin is found that lines the wall of the exit tunnel in the center of the 70S ribosome. The polypeptide is Large ribosomal subunit protein uL22 (Leptothrix cholodnii (strain ATCC 51168 / LMG 8142 / SP-6) (Leptothrix discophora (strain SP-6))).